The primary structure comprises 572 residues: Potassium-transporting ATPase potassium-binding subunit (572 aa).

Helical transmembrane passes span 5–25 (LAAG…YVPL), 71–91 (VGYT…LYVL), 97–117 (VLPL…NTAV), 142–162 (GLAV…VALI), 188–208 (ILLP…TIQS), 258–278 (PTPL…VCLT), 292–312 (LTVL…VTWA), 387–407 (GLYG…LLVG), 422–442 (ITMA…GTGI), 500–520 (LGMA…ALAG), and 548–568 (GTVL…GPIA).

The protein belongs to the KdpA family. The system is composed of three essential subunits: KdpA, KdpB and KdpC.

It is found in the cell membrane. Part of the high-affinity ATP-driven potassium transport (or Kdp) system, which catalyzes the hydrolysis of ATP coupled with the electrogenic transport of potassium into the cytoplasm. This subunit binds the extracellular potassium ions and delivers the ions to the membrane domain of KdpB through an intramembrane tunnel. In Mycobacteroides abscessus (strain ATCC 19977 / DSM 44196 / CCUG 20993 / CIP 104536 / JCM 13569 / NCTC 13031 / TMC 1543 / L948) (Mycobacterium abscessus), this protein is Potassium-transporting ATPase potassium-binding subunit.